Here is a 264-residue protein sequence, read N- to C-terminus: MVKPLPRLRLQGFNNLTKALSFNIYDVCYARTEEERQRYIDYIDERYDADRLTQILTDVAEIIGANILNIARQDYDPQGASVTILISEEPVIDKKQAGKELISDAVVTHMDKSHITVHTYPETHPQEGIATFRADIDVATCGVISPLKALNYLIESLESDIVIMDYRVRGFTRDVKGKKHFIDHKINSIQNFLSKSIKSRYEMFDVNVYQENIFHTKMHLKDFDLDQYLFEEKARNLSFKERMKIEALLKLEIEELFHGRNLAE.

Serine 113 acts as the Schiff-base intermediate with substrate; via pyruvic acid in catalysis. At serine 113 the chain carries Pyruvic acid (Ser); by autocatalysis. Histidine 118 functions as the Proton acceptor; for processing activity in the catalytic mechanism. The active-site Proton donor; for catalytic activity is cysteine 141.

The protein belongs to the prokaryotic AdoMetDC family. Type 2 subfamily. Heterooctamer of four alpha and four beta chains arranged as a tetramer of alpha/beta heterodimers. Pyruvate is required as a cofactor. Post-translationally, is synthesized initially as an inactive proenzyme. Formation of the active enzyme involves a self-maturation process in which the active site pyruvoyl group is generated from an internal serine residue via an autocatalytic post-translational modification. Two non-identical subunits are generated from the proenzyme in this reaction, and the pyruvate is formed at the N-terminus of the alpha chain, which is derived from the carboxyl end of the proenzyme. The post-translation cleavage follows an unusual pathway, termed non-hydrolytic serinolysis, in which the side chain hydroxyl group of the serine supplies its oxygen atom to form the C-terminus of the beta chain, while the remainder of the serine residue undergoes an oxidative deamination to produce ammonia and the pyruvoyl group blocking the N-terminus of the alpha chain.

The enzyme catalyses S-adenosyl-L-methionine + H(+) = S-adenosyl 3-(methylsulfanyl)propylamine + CO2. Its pathway is amine and polyamine biosynthesis; S-adenosylmethioninamine biosynthesis; S-adenosylmethioninamine from S-adenosyl-L-methionine: step 1/1. In terms of biological role, catalyzes the decarboxylation of S-adenosylmethionine to S-adenosylmethioninamine (dcAdoMet), the propylamine donor required for the synthesis of the polyamines spermine and spermidine from the diamine putrescine. This is S-adenosylmethionine decarboxylase proenzyme from Xylella fastidiosa (strain Temecula1 / ATCC 700964).